The following is a 253-amino-acid chain: CD151 antigen (253 aa).

The Cytoplasmic portion of the chain corresponds to 1-18; that stretch reads MGEFNEKKTTCGTVCLKY. 2 S-palmitoyl cysteine lipidation sites follow: C11 and C15. The chain crosses the membrane as a helical span at residues 19 to 39; sequence LLFTYNCCFWLAGLAVMAVGI. At 40–57 the chain is on the extracellular side; the sequence is WTLALKSDYISLLASGTY. A helical membrane pass occupies residues 58–78; it reads LATAYILVVAGTVVMVTGVLG. Over 79–91 the chain is Cytoplasmic; it reads CCATFKERRNLLR. The chain crosses the membrane as a helical span at residues 92 to 112; it reads LYFILLLIIFLLEIIAGILAY. The Extracellular segment spans residues 113–221; that stretch reads AYYQQLNTEL…LETFIQEHLR (109 aa). N-linked (GlcNAc...) asparagine glycosylation is present at N159. Residues 222 to 242 form a helical membrane-spanning segment; that stretch reads VIGAVGIGIACVQVFGMIFTC. S-palmitoyl cysteine attachment occurs at residues C242 and C243. At 243-253 the chain is on the cytoplasmic side; the sequence is CLYRSLKLEHY.

The protein belongs to the tetraspanin (TM4SF) family. As to quaternary structure, interacts with integrins ITGA3:ITGB1, ITGA5:ITGB1, ITGA3:ITGB1 and ITGA6:ITGB4 and with CD9 and CD181. Interacts (via the second extracellular domain) with integrin ITGAV:ITGB3. Interacts with ITGA3; this interaction modulates ITGA3 glycosylation pattern. Interacts with F11R. Interacts with RAC1 and CDC42; these interactions mediate physical association of RAC1 and CDC42 with integrin adhesion receptor complexes. In terms of processing, palmitoylated. Palmitoylation by ZDHHC2 regulates CD151 expression, association with other tetraspanin family proteins and function in cell adhesion. Post-translationally, ubiquitinated by RNF128 on lysine residues present in the tetraspanin amino terminus via 'Lys-48'-linked ubiquitin leading to proteasomal degradation. As to expression, expressed in a variety of tissues including vascular endothelium and epidermis. Expressed on erythroid cells, with a higher level of expression in erythroid precursors than on mature erythrocytes. Acts as a sensitive T-cell activation marker.

It is found in the cell membrane. Structural component of specialized membrane microdomains known as tetraspanin-enriched microdomains (TERMs), which act as platforms for receptor clustering and signaling. Plays a role in various cellular and molecular mechanism through its association with both integrin and non-integrin proteins. These interactions facilitate critical cellular functions, including cell-to-cell communication, wound healing, platelet aggregation, trafficking, cell motility, and angiogenesis. Via interaction with JAM-A/F11R and integrin ITGA3:ITGB1, promotes the recruitment of signaling molecules such as RAC1, CDC42 and RhoGTPases to facilitate the polarization of epithelial cells and the reorganization of the actin cytoskeleton, which are critical steps in cell migration process. Regulates the glycosylation pattern of ITGA3:ITGB1 thereby modulating its activity. Plays an essential role in the maintenance of central laminin-binding integrin ITGA6:ITGB4-containing adhesion complexes. Essential for the proper assembly of the glomerular and tubular basement membranes in kidney. Contributes to T-cell activation by modulating integrin signaling leading to activation of downstream targets PTK2 and MAPK1/MAPK3. Functionally, (Microbial infection) Plays a role in human papillomavirus 16/HPV-16 endocytosis upon binding to cell surface receptor. In terms of biological role, (Microbial infection) Plays a role in human cytomegalovirus entry into host cell by contributing to entry receptor binding, membrane fusion, or release of the capsid. This is CD151 antigen (CD151) from Homo sapiens (Human).